The primary structure comprises 55 residues: Large ribosomal subunit protein bL33 (55 aa).

Residues 1–11 (MAKGSREKIKL) are compositionally biased toward basic and acidic residues. The tract at residues 1–32 (MAKGSREKIKLESSASTGHFYTTSKNKRTKPE) is disordered. Residues 13 to 24 (SSASTGHFYTTS) show a composition bias toward polar residues.

This sequence belongs to the bacterial ribosomal protein bL33 family.

The chain is Large ribosomal subunit protein bL33 from Polynucleobacter necessarius subsp. necessarius (strain STIR1).